Consider the following 93-residue polypeptide: Neutrophil cationic peptide 2 (93 aa).

Positions M1–A19 are cleaved as a signal peptide. A propeptide spanning residues E20–G62 is cleaved from the precursor. 3 cysteine pairs are disulfide-bonded: C65-C93, C67-C82, and C72-C92.

Belongs to the alpha-defensin family.

The protein localises to the secreted. Its function is as follows. Has antibiotic, anti-fungi and antiviral activity. In Cavia porcellus (Guinea pig), this protein is Neutrophil cationic peptide 2.